The chain runs to 231 residues: CD302 antigen (231 aa).

The signal sequence occupies residues 1-21 (MSAAVVATLPTLLLLLGLAAA). Residues 22-169 (DCPSSSWVQF…YEKKYLPDHH (148 aa)) are Extracellular-facing. The C-type lectin domain occupies 31 to 153 (FQSNCYIFLQ…CEVSSVEGAL (123 aa)). Asparagine 110 carries an N-linked (GlcNAc...) asparagine glycan. A disulfide bond links cysteine 129 and cysteine 144. A helical membrane pass occupies residues 170-190 (ILITALVIASTTILTITGAVV). Residues 191-231 (WFLYKRNLTSGLTNTAYTTAPQLPYNDDCILVDAEENEYVA) are Cytoplasmic-facing.

It is found in the membrane. It localises to the cell projection. The protein localises to the filopodium. Its subcellular location is the cytoplasm. The protein resides in the cell cortex. It is found in the microvillus. In terms of biological role, potential multifunctional C-type lectin receptor that may play roles in endocytosis and phagocytosis as well as in cell adhesion and migration. This Trichosurus vulpecula (Brush-tailed possum) protein is CD302 antigen.